We begin with the raw amino-acid sequence, 397 residues long: Putative nickel insertion protein (397 aa).

Belongs to the LarC family.

The chain is Putative nickel insertion protein from Synechococcus sp. (strain JA-2-3B'a(2-13)) (Cyanobacteria bacterium Yellowstone B-Prime).